A 126-amino-acid chain; its full sequence is NQFDILLCSNLFGDIISDECAVITGSIGMLPSASFNEKNFGLYEPAGGSAPDIAGKNIANPIAQILSLSMLVRYGMKLKKIADKIDKSVASALKAGYRTADISNNNSYLKTNEMGDVISDFLINGK.

D14 and D18 together coordinate Mg(2+). 48-60 contacts NAD(+); the sequence is GSAPDIAGKNIAN.

It belongs to the isocitrate and isopropylmalate dehydrogenases family. LeuB type 1 subfamily. Homodimer. The cofactor is Mg(2+). Mn(2+) is required as a cofactor.

The protein resides in the cytoplasm. It catalyses the reaction (2R,3S)-3-isopropylmalate + NAD(+) = 4-methyl-2-oxopentanoate + CO2 + NADH. It functions in the pathway amino-acid biosynthesis; L-leucine biosynthesis; L-leucine from 3-methyl-2-oxobutanoate: step 3/4. Functionally, catalyzes the oxidation of 3-carboxy-2-hydroxy-4-methylpentanoate (3-isopropylmalate) to 3-carboxy-4-methyl-2-oxopentanoate. The product decarboxylates to 4-methyl-2 oxopentanoate. This is 3-isopropylmalate dehydrogenase (leuB) from Buchnera aphidicola subsp. Uroleucon rurale.